Here is a 141-residue protein sequence, read N- to C-terminus: Vasotocin-neurophysin VT (141 aa).

Cys-1 and Cys-6 are disulfide-bonded. Residue Gly-9 is modified to Glycine amide. Disulfide bonds link Cys-22/Cys-66, Cys-25/Cys-39, Cys-33/Cys-56, Cys-40/Cys-46, Cys-73/Cys-85, Cys-79/Cys-97, and Cys-86/Cys-91. Asn-117 is a glycosylation site (N-linked (GlcNAc...) asparagine).

It belongs to the vasopressin/oxytocin family. Post-translationally, seven disulfide bonds are present in neurophysin.

It is found in the secreted. Vasotocin is an antidiuretic hormone. This is Vasotocin-neurophysin VT from Pelophylax lessonae (Pool frog).